Consider the following 206-residue polypeptide: LexA repressor (206 aa).

The H-T-H motif DNA-binding region spans 28-48 (RAEIATRLGFKSANAAEEHLK). Active-site for autocatalytic cleavage activity residues include serine 123 and lysine 160.

This sequence belongs to the peptidase S24 family. Homodimer.

The catalysed reaction is Hydrolysis of Ala-|-Gly bond in repressor LexA.. In terms of biological role, represses a number of genes involved in the response to DNA damage (SOS response), including recA and lexA. In the presence of single-stranded DNA, RecA interacts with LexA causing an autocatalytic cleavage which disrupts the DNA-binding part of LexA, leading to derepression of the SOS regulon and eventually DNA repair. The chain is LexA repressor from Shewanella sp. (strain MR-7).